The primary structure comprises 396 residues: Lysophospholipid transporter LplT (396 aa).

Over methionine 1–lysine 17 the chain is Periplasmic. The chain crosses the membrane as a helical span at residues alanine 18–leucine 38. Topologically, residues alanine 39–proline 52 are cytoplasmic. Residues isoleucine 53–alanine 73 form a helical membrane-spanning segment. The Periplasmic segment spans residues aspartate 74–leucine 90. Residues leucine 91–valine 111 traverse the membrane as a helical segment. Over glycine 112 to alanine 144 the chain is Cytoplasmic. The helical transmembrane segment at isoleucine 145 to valine 165 threads the bilayer. A topological domain (periplasmic) is located at residue alanine 166. Residues leucine 167–leucine 187 traverse the membrane as a helical segment. The Cytoplasmic segment spans residues alanine 188 to serine 225. The helical transmembrane segment at leucine 226 to leucine 246 threads the bilayer. Over glycine 247–threonine 255 the chain is Periplasmic. The chain crosses the membrane as a helical span at residues tyrosine 256–valine 276. Residues threonine 277 to glutamate 279 are Cytoplasmic-facing. Residues threonine 280–leucine 300 form a helical membrane-spanning segment. The Periplasmic portion of the chain corresponds to glutamine 301–glutamate 303. The chain crosses the membrane as a helical span at residues leucine 304–proline 324. Residues leucine 325–alanine 342 lie on the Cytoplasmic side of the membrane. Residues isoleucine 343–leucine 363 form a helical membrane-spanning segment. Residues alanine 364–valine 365 lie on the Periplasmic side of the membrane. A helical transmembrane segment spans residues methionine 366–isoleucine 386. At threonine 387 to histidine 396 the chain is on the cytoplasmic side.

This sequence belongs to the major facilitator superfamily. LplT (TC 2.A.1.42) family.

It localises to the cell inner membrane. Its function is as follows. Catalyzes the facilitated diffusion of 2-acyl-glycero-3-phosphoethanolamine (2-acyl-GPE) into the cell. The chain is Lysophospholipid transporter LplT from Shigella flexneri.